A 93-amino-acid polypeptide reads, in one-letter code: Large ribosomal subunit protein uL23cz/uL23cy (93 aa).

The protein belongs to the universal ribosomal protein uL23 family. Part of the 50S ribosomal subunit.

The protein resides in the plastid. It is found in the chloroplast. Binds to 23S rRNA. The polypeptide is Large ribosomal subunit protein uL23cz/uL23cy (rpl23-A) (Panax ginseng (Korean ginseng)).